Consider the following 244-residue polypeptide: Ribonuclease PH (244 aa).

Phosphate is bound by residues R86 and G124–R126.

This sequence belongs to the RNase PH family. As to quaternary structure, homohexameric ring arranged as a trimer of dimers.

The catalysed reaction is tRNA(n+1) + phosphate = tRNA(n) + a ribonucleoside 5'-diphosphate. Functionally, phosphorolytic 3'-5' exoribonuclease that plays an important role in tRNA 3'-end maturation. Removes nucleotide residues following the 3'-CCA terminus of tRNAs; can also add nucleotides to the ends of RNA molecules by using nucleoside diphosphates as substrates, but this may not be physiologically important. Probably plays a role in initiation of 16S rRNA degradation (leading to ribosome degradation) during starvation. The polypeptide is Ribonuclease PH (Oceanobacillus iheyensis (strain DSM 14371 / CIP 107618 / JCM 11309 / KCTC 3954 / HTE831)).